Here is an 849-residue protein sequence, read N- to C-terminus: Formin-like protein 4 (849 aa).

Positions M1–A22 are cleaved as a signal peptide. The tract at residues I36–T104 is disordered. The segment covering W38–P52 has biased composition (pro residues). Residues D53–P64 are compositionally biased toward low complexity. A helical transmembrane segment spans residues I109–F129. Basic and acidic residues predominate over residues A185 to D194. A disordered region spans residues A185–A364. The segment covering G234–T246 has biased composition (gly residues). Low complexity predominate over residues W247–A279. Pro residues-rich tracts occupy residues A280 to P297, P324 to S339, and P346 to G360. An FH2 domain is found at E406–A823.

The protein belongs to the formin-like family. Class-I subfamily.

It is found in the membrane. This chain is Formin-like protein 4 (FH4), found in Oryza sativa subsp. japonica (Rice).